A 403-amino-acid polypeptide reads, in one-letter code: GTPase Obg (403 aa).

Residues 1–159 enclose the Obg domain; that stretch reads MKFIDESLIR…RDLLLELMLL (159 aa). In terms of domain architecture, OBG-type G spans 160–333; the sequence is ADVGMLGFPN…LCRDIMDFII (174 aa). GTP is bound by residues 166–173, 191–195, 213–216, 283–286, and 314–316; these read GFPNAGKS, FTTLV, DIPG, NKID, and SAA. Residues S173 and T193 each coordinate Mg(2+). Residues 364–403 form a disordered region; the sequence is YQFDDDEDWDDDWTEEDDDEDWDDDWSEEDDEGIEFIYKP. The segment covering 365–397 has biased composition (acidic residues); the sequence is QFDDDEDWDDDWTEEDDDEDWDDDWSEEDDEGI.

This sequence belongs to the TRAFAC class OBG-HflX-like GTPase superfamily. OBG GTPase family. Monomer. Requires Mg(2+) as cofactor.

The protein resides in the cytoplasm. Its function is as follows. An essential GTPase which binds GTP, GDP and possibly (p)ppGpp with moderate affinity, with high nucleotide exchange rates and a fairly low GTP hydrolysis rate. Plays a role in control of the cell cycle, stress response, ribosome biogenesis and in those bacteria that undergo differentiation, in morphogenesis control. The chain is GTPase Obg from Haemophilus influenzae (strain PittGG).